The primary structure comprises 299 residues: GTP cyclohydrolase FolE2 (299 aa).

Residues 1-25 form a disordered region; sequence MKTKQWPSKTERHKRFGSVPPVAGK.

The protein belongs to the GTP cyclohydrolase IV family.

It catalyses the reaction GTP + H2O = 7,8-dihydroneopterin 3'-triphosphate + formate + H(+). The protein operates within cofactor biosynthesis; 7,8-dihydroneopterin triphosphate biosynthesis; 7,8-dihydroneopterin triphosphate from GTP: step 1/1. Functionally, converts GTP to 7,8-dihydroneopterin triphosphate. The polypeptide is GTP cyclohydrolase FolE2 (Halalkalibacterium halodurans (strain ATCC BAA-125 / DSM 18197 / FERM 7344 / JCM 9153 / C-125) (Bacillus halodurans)).